A 346-amino-acid chain; its full sequence is Zinc finger CCCH domain-containing protein 28 (346 aa).

Residues 1–99 (MASAETPNPD…SPRYPDGKRR (99 aa)) form a disordered region. The span at 17–41 (DAAAAADPAAAAPAAAATDPAAAGS) shows a compositional bias: low complexity. The span at 62 to 86 (RSSRSRSRSPRRGRSRSRSRSRSRG) shows a compositional bias: basic residues. 6 consecutive C3H1-type zinc fingers follow at residues 103-131 (DLNVEVCRDFLRDRCARADIECKYAHPHP), 138-165 (DSKVTACADSLRNNCFRGRTCRYYHPPP), 181-209 (KVKMQVCRDFTRGRCSRSANECRFLHHSP), 211-237 (EDCAIVCQDFLRGRCDRKSCRYSHVMA), 282-308 (NYGVEVCRDYLKNMCNRESCRFAHPDL), and 314-340 (NTQVEVCRDFKRGECNRPACRFYHPPA).

This Oryza sativa subsp. japonica (Rice) protein is Zinc finger CCCH domain-containing protein 28.